The following is a 271-amino-acid chain: Mannosyl-3-phosphoglycerate phosphatase (271 aa).

D13 serves as the catalytic Nucleophile. Positions 13, 15, and 214 each coordinate Mg(2+).

It belongs to the HAD-like hydrolase superfamily. MPGP family. Mg(2+) is required as a cofactor.

Its subcellular location is the cytoplasm. It carries out the reaction 2-O-(alpha-D-mannosyl)-3-phosphoglycerate + H2O = (2R)-2-O-(alpha-D-mannosyl)-glycerate + phosphate. In Shigella boydii serotype 4 (strain Sb227), this protein is Mannosyl-3-phosphoglycerate phosphatase (yedP).